Reading from the N-terminus, the 212-residue chain is Putative tyrosine-protein phosphatase R622 (212 aa).

A Tyrosine-protein phosphatase domain is found at 9–191 (KISQVTNNIF…LQGYQSKKEN (183 aa)). Cys135 acts as the Phosphocysteine intermediate in catalysis.

This sequence belongs to the protein-tyrosine phosphatase family. Non-receptor class dual specificity subfamily.

The catalysed reaction is O-phospho-L-tyrosyl-[protein] + H2O = L-tyrosyl-[protein] + phosphate. The protein is Putative tyrosine-protein phosphatase R622 of Acanthamoeba polyphaga mimivirus (APMV).